Reading from the N-terminus, the 304-residue chain is MKFVMYPHLWESTTAVIEGGGHERVEDIKDADFIFFNGSAPEFPDLPENIKFVQASMAGIDALVKRGVVNEKARWANAAGLYADTVAESTIGLILAQMHMHAATRLAKSWSVRPEVENNKSWLHDNKTVAILGAGGIGVRLLEMLKPFNVKTIAVNNSGRPVEGADETFAMDKAEHVWAEADVFVLILPLTDATYQIVNAETLGKMKPSAVLVNVGRGPLINTDDLVDALNNGTIAGAALDVTDPEPLPDSHPLWEMDNVVITPHTANTNERIRALTGELTLRNIELFEAGEQMATEVDVVAGY.

NAD(+)-binding positions include 136-137 (GI), 215-217 (VGR), and aspartate 241. Residue arginine 217 is part of the active site. The active site involves glutamate 246. Catalysis depends on histidine 265, which acts as the Proton donor. Residue 265-268 (HTAN) coordinates NAD(+).

Belongs to the D-isomer specific 2-hydroxyacid dehydrogenase family.

This is an uncharacterized protein from Corynebacterium melassecola.